We begin with the raw amino-acid sequence, 233 residues long: Biosynthetic peptidoglycan transglycosylase (233 aa).

A helical transmembrane segment spans residues 8–28 (LIALPVGIFIFFNAYVYGNII).

It belongs to the glycosyltransferase 51 family.

It is found in the cell inner membrane. The catalysed reaction is [GlcNAc-(1-&gt;4)-Mur2Ac(oyl-L-Ala-gamma-D-Glu-L-Lys-D-Ala-D-Ala)](n)-di-trans,octa-cis-undecaprenyl diphosphate + beta-D-GlcNAc-(1-&gt;4)-Mur2Ac(oyl-L-Ala-gamma-D-Glu-L-Lys-D-Ala-D-Ala)-di-trans,octa-cis-undecaprenyl diphosphate = [GlcNAc-(1-&gt;4)-Mur2Ac(oyl-L-Ala-gamma-D-Glu-L-Lys-D-Ala-D-Ala)](n+1)-di-trans,octa-cis-undecaprenyl diphosphate + di-trans,octa-cis-undecaprenyl diphosphate + H(+). Its pathway is cell wall biogenesis; peptidoglycan biosynthesis. In terms of biological role, peptidoglycan polymerase that catalyzes glycan chain elongation from lipid-linked precursors. The polypeptide is Biosynthetic peptidoglycan transglycosylase (Neisseria gonorrhoeae (strain ATCC 700825 / FA 1090)).